A 342-amino-acid polypeptide reads, in one-letter code: Anthranilate phosphoribosyltransferase (342 aa).

5-phospho-alpha-D-ribose 1-diphosphate-binding positions include Gly-83, 86 to 87 (GD), Thr-91, 93 to 96 (NIST), 111 to 119 (KHGGRSVSS), and Ala-123. Gly-83 provides a ligand contact to anthranilate. Residue Ser-95 coordinates Mg(2+). Arg-169 is an anthranilate binding site. The Mg(2+) site is built by Asp-228 and Glu-229.

It belongs to the anthranilate phosphoribosyltransferase family. As to quaternary structure, homodimer. Mg(2+) is required as a cofactor.

It carries out the reaction N-(5-phospho-beta-D-ribosyl)anthranilate + diphosphate = 5-phospho-alpha-D-ribose 1-diphosphate + anthranilate. It functions in the pathway amino-acid biosynthesis; L-tryptophan biosynthesis; L-tryptophan from chorismate: step 2/5. In terms of biological role, catalyzes the transfer of the phosphoribosyl group of 5-phosphorylribose-1-pyrophosphate (PRPP) to anthranilate to yield N-(5'-phosphoribosyl)-anthranilate (PRA). The chain is Anthranilate phosphoribosyltransferase from Neisseria gonorrhoeae (strain ATCC 700825 / FA 1090).